A 216-amino-acid polypeptide reads, in one-letter code: Uracil phosphoribosyltransferase (216 aa).

5-phospho-alpha-D-ribose 1-diphosphate is bound by residues Arg85, Arg110, and 135 to 143 (DPMVATGYS). Uracil is bound by residues Ile200 and 205–207 (GDA). Asp206 contributes to the 5-phospho-alpha-D-ribose 1-diphosphate binding site.

The protein belongs to the UPRTase family. Mg(2+) serves as cofactor.

The enzyme catalyses UMP + diphosphate = 5-phospho-alpha-D-ribose 1-diphosphate + uracil. It functions in the pathway pyrimidine metabolism; UMP biosynthesis via salvage pathway; UMP from uracil: step 1/1. Allosterically activated by GTP. Catalyzes the conversion of uracil and 5-phospho-alpha-D-ribose 1-diphosphate (PRPP) to UMP and diphosphate. The protein is Uracil phosphoribosyltransferase of Burkholderia cenocepacia (strain ATCC BAA-245 / DSM 16553 / LMG 16656 / NCTC 13227 / J2315 / CF5610) (Burkholderia cepacia (strain J2315)).